Here is an 843-residue protein sequence, read N- to C-terminus: MSLISAVEDRDIHNIGKTSGGGSRTSSINSSKKSLKHGSKSLRKPKVYQTTGEPLSREALYKAKLKYGVYQSPAQSYSIGVSDAHAASDKAANLAHDNQTTVEAYKRMFIDPNATKAASKMGPKVVRNNSITSATSKTSKESQTKRKSKESPGAAASKAYSMTMETTSLSSQTNSRSYSITSASSVLSGASGSFNSTVNPKPKTLNLEKVLVGAEKKAESRIKERWEPEKTNFQYGVKTDEHGNLNQFSFSNEMMNNIMAKVDAPKAQDLQKVKKVSAEKEAKSMKFALGAANAVKDMHPGEDIDKSIALKAQKRETYLSQLTSQQVLTLARANVDRQLDIIEKSDMHRKLFTNMEYNKAAVAVAQSNHQKKTEFHNKINMGGGLFLSPEDITKIASGLISPVLGEVSERAEAQRAMDEEIAERTEAYNKSLNEWETMERSIISNDAKVLTTTANRHQTEKKTSQEKIKASFDALVARMDTKVAERETLLEDTKSKEIEFKKQMQQELKDEKARLDQDLEEWGKKCEQDITEARKEQEELLKPYHDDLANAEAEHKTLVEERDEINAEISRLQDAIVDHKRKISGYGNDLDAQKNRNIREDDKLLELGQTKESLESHLNDDVIILANKAKEQAELSTKEARLKQLEVDSLINERKSELNATEIELKKEKLNLLEAMKDVASARGDDKIDEEKVKKLIGMTSEEYLTQNKSVEKNVEDLPTQLEKIEEGDELKKEEIVGAETKNSGGDGVPVSTAAKEATETSSAVQTKEPEEKISIGNKSSGKEDANDCKSAEHSKEISVSQKAGNNKSLGVSPDSLEHTFSGFSQGSSIEDDQDAISNQEKK.

The segment at 1 to 54 (MSLISAVEDRDIHNIGKTSGGGSRTSSINSSKKSLKHGSKSLRKPKVYQTTGEP) is disordered. Serine 2 is modified (N-acetylserine). Serine 2 carries the post-translational modification Phosphoserine. Over residues 33-46 (KSLKHGSKSLRKPK) the composition is skewed to basic residues. A phosphoserine mark is found at serine 88 and serine 130. The tract at residues 120-176 (KMGPKVVRNNSITSATSKTSKESQTKRKSKESPGAAASKAYSMTMETTSLSSQTNSR) is disordered. 2 stretches are compositionally biased toward polar residues: residues 127 to 137 (RNNSITSATSK) and 163 to 176 (TMETTSLSSQTNSR). Phosphoserine is present on residues serine 182, serine 401, serine 584, and serine 710. Residues 717–843 (DLPTQLEKIE…QDAISNQEKK (127 aa)) form a disordered region. Threonine 720 is modified (phosphothreonine). Over residues 752 to 764 (STAAKEATETSSA) the composition is skewed to low complexity. 2 positions are modified to phosphoserine: serine 763 and serine 775. Positions 781 to 797 (SGKEDANDCKSAEHSKE) are enriched in basic and acidic residues. Polar residues predominate over residues 798 to 810 (ISVSQKAGNNKSL). Phosphoserine is present on residues serine 816, serine 828, serine 829, and serine 838.

Belongs to the EIS1 family.

The protein localises to the cytoplasmic granule. The protein resides in the cell membrane. In terms of biological role, required for normal formation of eisosomes, large cytoplasmic protein assemblies that localize to specialized domains on plasma membrane and mark the site of endocytosis. This is Eisosome protein 1 (EIS1) from Saccharomyces cerevisiae (strain JAY291) (Baker's yeast).